The sequence spans 1323 residues: Glutamate receptor ionotropic, NMDA 2D (1323 aa).

The signal sequence occupies residues 1-27 (MRGAGGPRGPRGPAKMLLLLALACASP). The Extracellular portion of the chain corresponds to 28–579 (FPEEVPGPGA…SPSAFLEPYS (552 aa)). N-linked (GlcNAc...) asparagine glycosylation is present at asparagine 89. A disulfide bridge connects residues cysteine 101 and cysteine 345. N-linked (GlcNAc...) asparagine glycans are attached at residues asparagine 349, asparagine 363, asparagine 381, and asparagine 464. 2 disulfides stabilise this stretch: cysteine 452–cysteine 480 and cysteine 459–cysteine 481. L-glutamate contacts are provided by serine 536, threonine 538, and arginine 543. Asparagine 566 is a glycosylation site (N-linked (GlcNAc...) asparagine). Residues 580 to 601 (PAVWVMMFVMCLTVVAVTVFIF) form a helical membrane-spanning segment. Residues 602-626 (EYLSPVGYNRSLATGKRPGGSTFTI) are Cytoplasmic-facing. An intramembrane region (discontinuously helical) is located at residues 627–638 (GKSIWLLWALVF). Residues 628 to 647 (KSIWLLWALVFNNSVPVENP) are pore-forming. Topologically, residues 639–650 (NNSVPVENPRGT) are cytoplasmic. A helical transmembrane segment spans residues 651 to 671 (TSKIMVLVWAFFAVIFLASYT). At 672-840 (ANLAAFMIQE…EVMSSKLDID (169 aa)) the chain is on the extracellular side. Residue asparagine 712 is glycosylated (N-linked (GlcNAc...) asparagine). L-glutamate contacts are provided by serine 714, threonine 715, and aspartate 756. A disulfide bridge connects residues cysteine 770 and cysteine 825. A helical membrane pass occupies residues 841 to 864 (NMAGVFYMLLVAMGLSLLVFAWEH). Over 865–1323 (LVYWRLRHCL…AHFSSLESEV (459 aa)) the chain is Cytoplasmic. 3 disordered regions span residues 897 to 952 (EAAP…PGGA), 977 to 1112 (AAPR…SLGG), and 1201 to 1323 (PWAA…ESEV). The span at 899–929 (APPPAKPPPPPQPLPSPAYPAARPPPGPAPF) shows a compositional bias: pro residues. Residues 931–940 (PRERAAADRW) show a composition bias toward basic and acidic residues. The span at 977-986 (AAPRGAAGRP) shows a compositional bias: low complexity. The span at 987–1001 (LSPPTTQPPQKPPPS) shows a compositional bias: pro residues. The span at 1030–1039 (AAAAAAVGPP) shows a compositional bias: low complexity. Pro residues predominate over residues 1080–1092 (TAPPPRRAAPPPC). The span at 1208–1228 (PRRRARCGCPRPHPHRPRASH) shows a compositional bias: basic residues. At arginine 1303 the chain carries Omega-N-methylarginine. The residue at position 1313 (serine 1313) is a Phosphoserine. The short motif at 1321–1323 (SEV) is the PDZ-binding element.

This sequence belongs to the glutamate-gated ion channel (TC 1.A.10.1) family. NR2D/GRIN2D subfamily. As to quaternary structure, heterotetramer. Forms heterotetrameric channels composed of two GluN1/zeta subunits (GRIN1), and two identical GluN2/epsilon subunits (GRIN2A, GRIN2B, GRIN2C or GRIN2D) or GluN3 subunits (GRIN3A or GRIN3B) (in vitro). In vivo, the subunit composition may depend on the expression levels of the different subunits. Interacts with PDZ domains of PATJ and DLG4. In terms of tissue distribution, expressed in brain, mainly in the subcortical region.

It localises to the cell membrane. The protein resides in the postsynaptic cell membrane. It catalyses the reaction Ca(2+)(in) = Ca(2+)(out). The catalysed reaction is Na(+)(in) = Na(+)(out). The enzyme catalyses K(+)(in) = K(+)(out). Component of N-methyl-D-aspartate (NMDA) receptors (NMDARs) that function as heterotetrameric, ligand-gated cation channels with high calcium permeability and voltage-dependent block by Mg(2+). Participates in synaptic plasticity for learning and memory formation. Channel activation requires binding of the neurotransmitter L-glutamate to the GluN2 subunit, glycine or D-serine binding to the GluN1 subunit, plus membrane depolarization to eliminate channel inhibition by Mg(2+). NMDARs mediate simultaneously the potasium efflux and the influx of calcium and sodium. Each GluN2 subunit confers differential attributes to channel properties, including activation, deactivation and desensitization kinetics, pH sensitivity, Ca2(+) permeability, and binding to allosteric modulators. The chain is Glutamate receptor ionotropic, NMDA 2D from Rattus norvegicus (Rat).